Reading from the N-terminus, the 587-residue chain is Kelch-like protein 3 (587 aa).

Serine 10 carries the post-translational modification Phosphoserine. Positions 50–117 (CDVMIVAEDV…IYTAEIEVTE (68 aa)) constitute a BTB domain. Residues 152–254 (CLGIRAFADV…PRDYLVQTVE (103 aa)) form the BACK domain. Threonine 295 bears the Phosphothreonine mark. 6 Kelch repeats span residues 302-347 (VMIV…FMAG), 348-394 (HVYA…VLND), 396-441 (LYAV…VVEG), 442-490 (KLYA…VLSG), 491-537 (QLYA…AVNG), and 539-585 (LYVV…VIHK). Position 375 is a phosphothreonine (threonine 375). Serine 376 is subject to Phosphoserine. Serine 433 bears the Phosphoserine; by PKA and PKC mark.

Belongs to the KLHL3 family. In terms of assembly, homodimer. Component of the BCR(KLHL3) E3 ubiquitin ligase complex, at least composed of CUL3 and KLHL3 and RBX1. Interacts with CLDN8. Phosphorylation at Ser-433 by PKA or PKC decreases the interaction with WNK1 and WNK4, leading to inhibit their degradation by the BCR(KLHL3) complex. Phosphorylated at Ser-433 by PKC in response to angiotensin II signaling, decreasing ability to promote degradation of WNK1 and WNK4, leading to activation of Na-Cl cotransporter SLC12A3/NCC. Phosphorylation at Ser-433 is increased by insulin. Dephosphorylated at Ser-433 by calcineurin PPP3CA, promoting degradation of WNK1 and WNK4. As to expression, widely expressed.

The protein resides in the cytoplasm. It is found in the cytosol. Its subcellular location is the cytoskeleton. It functions in the pathway protein modification; protein ubiquitination. Substrate-specific adapter of a BCR (BTB-CUL3-RBX1) E3 ubiquitin ligase complex that acts as a regulator of ion transport in the distal nephron. The BCR(KLHL3) complex acts by mediating ubiquitination and degradation of WNK1 and WNK4, two activators of Na-Cl cotransporter SLC12A3/NCC in distal convoluted tubule cells of kidney, thereby regulating NaCl reabsorption. The BCR(KLHL3) complex also mediates ubiquitination and degradation of WNK3. The BCR(KLHL3) complex also mediates ubiquitination of CLDN8, a tight-junction protein required for paracellular chloride transport in the kidney, leading to its degradation. The protein is Kelch-like protein 3 of Homo sapiens (Human).